Consider the following 157-residue polypeptide: Arginine repressor (157 aa).

This sequence belongs to the ArgR family.

The protein localises to the cytoplasm. It participates in amino-acid biosynthesis; L-arginine biosynthesis [regulation]. Its function is as follows. Regulates arginine biosynthesis genes. This Deinococcus deserti (strain DSM 17065 / CIP 109153 / LMG 22923 / VCD115) protein is Arginine repressor.